The following is a 332-amino-acid chain: Ribosomal RNA small subunit methyltransferase C (332 aa).

It belongs to the methyltransferase superfamily. RsmC family. As to quaternary structure, monomer.

The protein localises to the cytoplasm. The catalysed reaction is guanosine(1207) in 16S rRNA + S-adenosyl-L-methionine = N(2)-methylguanosine(1207) in 16S rRNA + S-adenosyl-L-homocysteine + H(+). In terms of biological role, specifically methylates the guanine in position 1207 of 16S rRNA in the 30S particle. The protein is Ribosomal RNA small subunit methyltransferase C of Pseudomonas putida (strain ATCC 47054 / DSM 6125 / CFBP 8728 / NCIMB 11950 / KT2440).